The sequence spans 488 residues: Long chain base biosynthesis protein 2a (488 aa).

The chain crosses the membrane as a helical span at residues 4-24; that stretch reads LPYTTALTTLFSYGLLFAFGQ. K311 is modified (N6-(pyridoxal phosphate)lysine).

This sequence belongs to the class-II pyridoxal-phosphate-dependent aminotransferase family. As to quaternary structure, heterodimer with LCB1. Component of the serine palmitoyltransferase (SPT) complex, composed of LCB1 and LCB2. It depends on pyridoxal 5'-phosphate as a cofactor.

It is found in the endoplasmic reticulum membrane. The enzyme catalyses L-serine + hexadecanoyl-CoA + H(+) = 3-oxosphinganine + CO2 + CoA. It participates in lipid metabolism; sphingolipid metabolism. In terms of biological role, serine palmitoyltransferase (SPT). The heterodimer formed with LCB1 constitutes the catalytic core. The sequence is that of Long chain base biosynthesis protein 2a from Oryza sativa subsp. japonica (Rice).